The following is a 225-amino-acid chain: Sirohydrochlorin ferrochelatase, chloroplastic (225 aa).

A chloroplast-targeting transit peptide spans 1–46 (MTTQSQFLVNLSYGGLASQSNLRANNRVSPSSCQITRTNRSWALPV). 2 residues coordinate Fe cation: H89 and H155. The [4Fe-4S] cluster site is built by C199, C210, C213, and C219.

It belongs to the CbiX family. SirB subfamily. In terms of assembly, homodimer. [4Fe-4S] cluster is required as a cofactor.

It is found in the plastid. Its subcellular location is the chloroplast. The catalysed reaction is siroheme + 2 H(+) = sirohydrochlorin + Fe(2+). It participates in porphyrin-containing compound metabolism; siroheme biosynthesis; siroheme from sirohydrochlorin: step 1/1. Its function is as follows. Chelates iron to the siroheme precursor. Catalyzes the last step of the siroheme biosynthesis. Unlike its counterparts in bacteria, contains an [Fe-S] cluster which is not involved directly in the enzymatic reaction, but may play regulatory role in iron, sulfur and tetrapyrrole metabolism. The [Fe-S] cluster is required for normal plant growth. In Arabidopsis thaliana (Mouse-ear cress), this protein is Sirohydrochlorin ferrochelatase, chloroplastic.